A 331-amino-acid chain; its full sequence is Serine racemase (331 aa).

Ser34 and Lys54 together coordinate ATP. The active-site Proton acceptor is Lys59. The residue at position 59 (Lys59) is an N6-(pyridoxal phosphate)lysine. Thr81 contacts Ca(2+). Ser84 functions as the Proton acceptor in the catalytic mechanism. Residue Asn86 participates in pyridoxal 5'-phosphate binding. Position 121 (Tyr121) interacts with ATP. Asp178 contributes to the Mg(2+) binding site. Pyridoxal 5'-phosphate-binding residues include Gly186, Gly187, and Gly188. Ca(2+)-binding residues include Glu210, Ala214, and Asp216. Positions 210, 214, and 216 each coordinate Mg(2+). Mn(2+)-binding residues include Glu210, Ala214, and Asp216. Lys278 contacts ATP. Ser314 is a binding site for pyridoxal 5'-phosphate. Asn317 lines the ATP pocket.

Belongs to the serine/threonine dehydratase family. As to quaternary structure, homodimer. Mg(2+) serves as cofactor. Mn(2+) is required as a cofactor. Requires Ca(2+) as cofactor. The cofactor is pyridoxal 5'-phosphate. In terms of tissue distribution, expressed in the whole plant.

It carries out the reaction L-serine = D-serine. It catalyses the reaction L-serine = pyruvate + NH4(+). The enzyme catalyses D-serine = pyruvate + NH4(+). With respect to regulation, inhibited by hydroxylamine. Racemase activity is enhanced by Ca(2+), Mg(2+), Mn(2+), and is decreased by Ni(2+), Zn(2+). Hydratase activity is enhanced by Ca(2+), Mg(2+), Mn(2+), Cu(2+), Fe(2+), Ni(2+). Its function is as follows. Catalyzes the synthesis of D-serine from L-serine. Has dehydratase activity towards both L-serine and D-serine. Displays high substrate specificity for L-serine, whereas L-alanine, L-arginine, and L-glutamine were poor substrates. The polypeptide is Serine racemase (SR) (Arabidopsis thaliana (Mouse-ear cress)).